A 190-amino-acid polypeptide reads, in one-letter code: Potassium-transporting ATPase KdpC subunit (190 aa).

A helical transmembrane segment spans residues 10 to 30; sequence TFLFLLLITGGVYPLLTTALG.

This sequence belongs to the KdpC family. As to quaternary structure, the system is composed of three essential subunits: KdpA, KdpB and KdpC.

It localises to the cell inner membrane. Functionally, part of the high-affinity ATP-driven potassium transport (or Kdp) system, which catalyzes the hydrolysis of ATP coupled with the electrogenic transport of potassium into the cytoplasm. This subunit acts as a catalytic chaperone that increases the ATP-binding affinity of the ATP-hydrolyzing subunit KdpB by the formation of a transient KdpB/KdpC/ATP ternary complex. The chain is Potassium-transporting ATPase KdpC subunit from Escherichia coli O7:K1 (strain IAI39 / ExPEC).